The primary structure comprises 623 residues: Vacuolar-sorting receptor 1 (623 aa).

A signal peptide spans 1–22 (MKCWRLSAILFLGFMLTSLSTA). Residues 23–564 (RFVVEKNSLS…SKTASQAKST (542 aa)) are Lumenal-facing. In terms of domain architecture, PA spans 54-163 (QYGGSMAGNV…SFGEKLKDAI (110 aa)). N-linked (GlcNAc...) asparagine glycosylation is present at N143. 2 EGF-like domains span residues 411–461 (ETNE…TTCE) and 464–511 (GHGR…KNCE). 6 disulfides stabilise this stretch: C415/C433, C422/C442, C444/C460, C468/C488, C475/C496, and C498/C510. In terms of domain architecture, EGF-like 3; calcium-binding spans 512–554 (DIDECKDKKACQCPECSCKNTWGSYNCSCSGDLLYIKDQDTCI). N-linked (GlcNAc...) asparagine glycosylation is present at N537. C540 and C553 are joined by a disulfide. A helical transmembrane segment spans residues 565–585 (WAAFWVVLIALAMIAGGGFLV). Residues 586-623 (YKYRIRQYMDSEIRAIMAQYMPLDSQEEGPNHVNHQRG) lie on the Cytoplasmic side of the membrane. The short motif at 605–608 (YMPL) is the Tyrosine-based internalization motif element.

It belongs to the VSR (BP-80) family. As to quaternary structure, interacts with the N-terminal propeptide of aleurein (proaleurein).

The protein localises to the membrane. It localises to the golgi apparatus membrane. It is found in the cytoplasmic vesicle. Its subcellular location is the clathrin-coated vesicle membrane. The protein resides in the prevacuolar compartment membrane. In terms of biological role, vacuolar-sorting receptor (VSR) involved in clathrin-coated vesicles sorting from Golgi apparatus to vacuoles. Seems to binds preferentially proteins containing a N-terminal NPIR motif. In Pisum sativum (Garden pea), this protein is Vacuolar-sorting receptor 1 (BP80).